A 407-amino-acid chain; its full sequence is L-cysteine:1D-myo-inositol 2-amino-2-deoxy-alpha-D-glucopyranoside ligase (407 aa).

Position 43 (Cys43) interacts with Zn(2+). Residues 43–46 (CGIT), Thr58, and 81–83 (NAT) contribute to the L-cysteinyl-5'-AMP site. Positions 45 to 55 (ITPYDATHLGH) match the 'HIGH' region motif. The 'ERGGDP' region motif lies at 183–188 (QRGGDP). Position 223 (Trp223) interacts with L-cysteinyl-5'-AMP. Residue Cys227 coordinates Zn(2+). 245 to 247 (GSD) is an L-cysteinyl-5'-AMP binding site. His252 provides a ligand contact to Zn(2+). Val279 contributes to the L-cysteinyl-5'-AMP binding site. The 'KMSKS' region motif lies at 285–289 (KMSKS).

Belongs to the class-I aminoacyl-tRNA synthetase family. MshC subfamily. As to quaternary structure, monomer. Zn(2+) serves as cofactor.

The catalysed reaction is 1D-myo-inositol 2-amino-2-deoxy-alpha-D-glucopyranoside + L-cysteine + ATP = 1D-myo-inositol 2-(L-cysteinylamino)-2-deoxy-alpha-D-glucopyranoside + AMP + diphosphate + H(+). Functionally, catalyzes the ATP-dependent condensation of GlcN-Ins and L-cysteine to form L-Cys-GlcN-Ins. This Streptosporangium roseum (strain ATCC 12428 / DSM 43021 / JCM 3005 / KCTC 9067 / NCIMB 10171 / NRRL 2505 / NI 9100) protein is L-cysteine:1D-myo-inositol 2-amino-2-deoxy-alpha-D-glucopyranoside ligase.